Reading from the N-terminus, the 591-residue chain is L-fucose isomerase (591 aa).

Residues Glu-337 and Asp-361 each act as proton acceptor in the active site. Residues Glu-337, Asp-361, and His-528 each contribute to the Mn(2+) site.

The protein belongs to the L-fucose isomerase family. As to quaternary structure, homohexamer. Mn(2+) is required as a cofactor.

Its subcellular location is the cytoplasm. It carries out the reaction L-fucose = L-fuculose. It participates in carbohydrate degradation; L-fucose degradation; L-lactaldehyde and glycerone phosphate from L-fucose: step 1/3. Its function is as follows. Converts the aldose L-fucose into the corresponding ketose L-fuculose. The sequence is that of L-fucose isomerase from Escherichia coli (strain ATCC 8739 / DSM 1576 / NBRC 3972 / NCIMB 8545 / WDCM 00012 / Crooks).